Here is a 687-residue protein sequence, read N- to C-terminus: Fork-head transcriptional regulator 2 (687 aa).

Residues 1–23 form a disordered region; that stretch reads MSAQFITPKKRPHSPLDSNELLP. The 65-residue stretch at 82 to 146 folds into the FHA domain; sequence VSIGRNIELS…NGARIDGQKV (65 aa). Positions 226–241 are enriched in polar residues; sequence SPSSISANSLQSNLDQ. The interval 226–246 is disordered; sequence SPSSISANSLQSNLDQDLSKE. The segment at residues 252–350 is a DNA-binding region (fork-head); the sequence is KPPYSYATMI…SDGTISKTRR (99 aa). 3 disordered regions span residues 385 to 449, 472 to 569, and 584 to 687; these read AASI…RYTP, QLGR…IGLN, and PERG…MIDS. A compositionally biased stretch (low complexity) spans 389 to 410; the sequence is PQQQKQQQQQQKRPPQQQNSQP. Polar residues predominate over residues 411–442; it reads HLSQPHYTIPSNPMQTNSMGYIPQSNIYNMSN. The segment covering 472-490 has biased composition (low complexity); the sequence is QLGRPQGQLGQPMMQPQQQ. The segment covering 491-540 has biased composition (polar residues); sequence SYTSSNIKTEPSSPKRNPSISNNTPKMAKGTVSTESHSRSTSYTTTQLHE. Composition is skewed to low complexity over residues 542–563 and 589–624; these read SNFN…TTTN and KGNP…PNTN. Positions 625–659 are enriched in polar residues; it reads QSSPAFWNFVQFSTPNGQSPVRKSSEEVGNNSPTL. The Nuclear localization signal signature appears at 663 to 670; it reads IKREREND.

It is found in the nucleus. Functionally, transcription factor required for the morphogenesis of true hyphal as well as yeast cells. Contributes to virulence. The polypeptide is Fork-head transcriptional regulator 2 (FKH2) (Candida albicans (strain SC5314 / ATCC MYA-2876) (Yeast)).